A 107-amino-acid chain; its full sequence is U1-lycotoxin-Ls1l (107 aa).

An N-terminal signal peptide occupies residues 1–20 (MMKVLVVVALLVTLISYSSS). Residues 21–41 (EGIDDLEADELLSLMANEQTR) constitute a propeptide that is removed on maturation. 4 disulfide bridges follow: Cys-44-Cys-59, Cys-51-Cys-68, Cys-58-Cys-86, and Cys-70-Cys-84.

This sequence belongs to the neurotoxin 19 (CSTX) family. 04 (U1-Lctx) subfamily. Expressed by the venom gland.

Its subcellular location is the secreted. In Lycosa singoriensis (Wolf spider), this protein is U1-lycotoxin-Ls1l.